Here is a 369-residue protein sequence, read N- to C-terminus: Anthranilate phosphoribosyltransferase (369 aa).

5-phospho-alpha-D-ribose 1-diphosphate contacts are provided by residues Gly85, Gly88–Asp89, Thr93, Asn95–Thr98, Lys113–Ser121, and Ser125. Gly85 serves as a coordination point for anthranilate. Ser97 contacts Mg(2+). Asn116 lines the anthranilate pocket. Arg171 serves as a coordination point for anthranilate. Residues Asp229 and Glu230 each contribute to the Mg(2+) site.

This sequence belongs to the anthranilate phosphoribosyltransferase family. Homodimer. The cofactor is Mg(2+).

The catalysed reaction is N-(5-phospho-beta-D-ribosyl)anthranilate + diphosphate = 5-phospho-alpha-D-ribose 1-diphosphate + anthranilate. It functions in the pathway amino-acid biosynthesis; L-tryptophan biosynthesis; L-tryptophan from chorismate: step 2/5. Its function is as follows. Catalyzes the transfer of the phosphoribosyl group of 5-phosphorylribose-1-pyrophosphate (PRPP) to anthranilate to yield N-(5'-phosphoribosyl)-anthranilate (PRA). This chain is Anthranilate phosphoribosyltransferase, found in Frankia alni (strain DSM 45986 / CECT 9034 / ACN14a).